A 179-amino-acid polypeptide reads, in one-letter code: Large ribosomal subunit protein uL5 (179 aa).

It belongs to the universal ribosomal protein uL5 family. In terms of assembly, part of the 50S ribosomal subunit; part of the 5S rRNA/L5/L18/L25 subcomplex. Contacts the 5S rRNA and the P site tRNA. Forms a bridge to the 30S subunit in the 70S ribosome.

In terms of biological role, this is one of the proteins that bind and probably mediate the attachment of the 5S RNA into the large ribosomal subunit, where it forms part of the central protuberance. In the 70S ribosome it contacts protein S13 of the 30S subunit (bridge B1b), connecting the 2 subunits; this bridge is implicated in subunit movement. Contacts the P site tRNA; the 5S rRNA and some of its associated proteins might help stabilize positioning of ribosome-bound tRNAs. The chain is Large ribosomal subunit protein uL5 from Burkholderia cenocepacia (strain HI2424).